A 24-amino-acid polypeptide reads, in one-letter code: SM-11044-binding protein (24 aa).

Its function is as follows. May mediate relaxation of depolarized colon tonus. It binds iodocyanopindolol and SM-11044. The sequence is that of SM-11044-binding protein from Rattus norvegicus (Rat).